We begin with the raw amino-acid sequence, 290 residues long: Probable porphobilinogen deaminase (290 aa).

Residue C230 is modified to S-(dipyrrolylmethanemethyl)cysteine.

This sequence belongs to the HMBS family. Requires dipyrromethane as cofactor.

It carries out the reaction 4 porphobilinogen + H2O = hydroxymethylbilane + 4 NH4(+). The protein operates within porphyrin-containing compound metabolism; protoporphyrin-IX biosynthesis; coproporphyrinogen-III from 5-aminolevulinate: step 2/4. Tetrapolymerization of the monopyrrole PBG into the hydroxymethylbilane pre-uroporphyrinogen in several discrete steps. This Metallosphaera sedula (strain ATCC 51363 / DSM 5348 / JCM 9185 / NBRC 15509 / TH2) protein is Probable porphobilinogen deaminase.